The primary structure comprises 78 residues: RNA-binding protein KhpA (78 aa).

The KH domain occupies 29 to 78; the sequence is TIIYELTVAKGDIGKIIGKEGRTIKAIRTLLVSVASRDNVKVSLEIMEER.

It belongs to the KhpA RNA-binding protein family.

The protein localises to the cytoplasm. A probable RNA-binding protein. This chain is RNA-binding protein KhpA, found in Chlamydia muridarum (strain MoPn / Nigg).